Reading from the N-terminus, the 327-residue chain is S-adenosylmethionine/S-adenosylhomocysteine transporter (327 aa).

The next 10 membrane-spanning stretches (helical) occupy residues 22 to 42, 53 to 73, 85 to 105, 114 to 134, 143 to 163, 165 to 185, 202 to 222, 240 to 260, 271 to 291, and 294 to 314; these read CDMA…SFAL, LFVT…LLLC, IMPI…LEFI, TACF…YVQL, LGGL…GGSE, VAEW…ATCL, SLSM…LSLI, LFLQ…YNLF, FLSF…WLLL, and SFPP…RLIY. The 124-residue stretch at 34 to 157 folds into the EamA 1 domain; that stretch reads FIWSSSFALS…LGLVSYLVYL (124 aa). One can recognise an EamA 2 domain in the interval 189 to 313; that stretch reads GWTLLRKLGR…GFMVLGCRLI (125 aa).

It belongs to the drug/metabolite transporter (DMT) superfamily. 10 TMS drug/metabolite exporter (DME) (TC 2.A.7.3) family.

The protein localises to the cell membrane. Functionally, transports S-adenosylmethionine (SAM) and S-adenosylhomocysteine (SAH). Allows bacteria to acquire SAM from the eukaryotic host cell and to likely remove the toxic by-product SAH. The protein is S-adenosylmethionine/S-adenosylhomocysteine transporter of Chlamydia trachomatis serovar D (strain ATCC VR-885 / DSM 19411 / UW-3/Cx).